A 207-amino-acid chain; its full sequence is ATP synthase subunit b (207 aa).

The signal sequence occupies residues 1 to 27 (MKLRATFVFKTTLVALSFALFALFLVS). Cys28 is lipidated: N-palmitoyl cysteine. Cys28 is lipidated: S-diacylglycerol cysteine. Residues 49–69 (WVFLAHLLAFVILLFLLLFLF) traverse the membrane as a helical segment.

The protein belongs to the ATPase B chain family. As to quaternary structure, F-type ATPases have 2 components, F(1) - the catalytic core - and F(0) - the membrane proton channel. F(1) has five subunits: alpha(3), beta(3), gamma(1), delta(1), epsilon(1). F(0) has three main subunits: a(1), b(2) and c(10-14). The alpha and beta chains form an alternating ring which encloses part of the gamma chain. F(1) is attached to F(0) by a central stalk formed by the gamma and epsilon chains, while a peripheral stalk is formed by the delta and b chains.

Its subcellular location is the cell membrane. F(1)F(0) ATP synthase produces ATP from ADP in the presence of a proton or sodium gradient. F-type ATPases consist of two structural domains, F(1) containing the extramembraneous catalytic core and F(0) containing the membrane proton channel, linked together by a central stalk and a peripheral stalk. During catalysis, ATP synthesis in the catalytic domain of F(1) is coupled via a rotary mechanism of the central stalk subunits to proton translocation. In terms of biological role, component of the F(0) channel, it forms part of the peripheral stalk, linking F(1) to F(0). This Mycoplasma pneumoniae (strain ATCC 29342 / M129 / Subtype 1) (Mycoplasmoides pneumoniae) protein is ATP synthase subunit b.